Here is a 240-residue protein sequence, read N- to C-terminus: Inhibitor of growth protein 5 (240 aa).

Residues methionine 115–threonine 165 form a disordered region. Position 118 is a phosphoserine (serine 118). Position 126 is an omega-N-methylarginine (arginine 126). The segment at proline 186–glutamate 235 adopts a PHD-type zinc-finger fold. Cysteine 189, cysteine 191, cysteine 202, cysteine 207, histidine 213, cysteine 216, cysteine 229, and cysteine 232 together coordinate Zn(2+).

It belongs to the ING family. In terms of assembly, component of the HBO1 complex composed of KAT7/HBO1, MEAF6, ING5, and one scaffold subunit: complexes containing BRPF scaffold (BRPF1, BRD1/BRPF2 or BRPF3) direct KAT7/HBO1 specificity towards H3K14ac, while complexes containing JADE scaffold (JADE1, JADE2 and JADE3) mediate acetylation of histone H4. Component of the MOZ/MORF complex composed at least of ING5, KAT6A, KAT6B, MEAF6 and one of BRPF1, BRD1/BRPF2 and BRPF3. Interacts with H3K4me3 and to a lesser extent with H3K4me2. Interacts with EP300 and p53/TP53. Interacts with INCA1.

The protein localises to the nucleus. The protein resides in the chromosome. Functionally, component of the HBO1 complex, which specifically mediates acetylation of histone H3 at 'Lys-14' (H3K14ac) and, to a lower extent, acetylation of histone H4. Component of the MOZ/MORF complex which has a histone H3 acetyltransferase activity. Through chromatin acetylation it may regulate DNA replication and may function as a transcriptional coactivator. Inhibits cell growth, induces a delay in S-phase progression and enhances Fas-induced apoptosis in an INCA1-dependent manner. This is Inhibitor of growth protein 5 (Ing5) from Mus musculus (Mouse).